A 408-amino-acid polypeptide reads, in one-letter code: UDP-N-acetylglucosamine--dolichyl-phosphate N-acetylglucosaminephosphotransferase (408 aa).

The Lumenal segment spans residues 1–10; sequence MWAFSELPMP. Residues 11–38 traverse the membrane as a helical segment; that stretch reads LLINLIVSLLGFVATVTLIPAFRGHFIA. Over 39–58 the chain is Cytoplasmic; the sequence is ARLCGQDLNKTSRQQIPESQ. UDP-N-acetyl-alpha-D-glucosamine-binding positions include 44 to 46 and Glu-56; that span reads QDL. Tunicamycin A1 is bound at residue Leu-46. The chain crosses the membrane as a helical span at residues 59-78; the sequence is GVISGAVFLIILFCFIPFPF. The Lumenal portion of the chain corresponds to 79–91; sequence LNCFVKEQCKAFP. The helical transmembrane segment at 92-118 threads the bilayer; it reads HHEFVALIGALLAICCMIFLGFADDVL. Asn-119 serves as a coordination point for tunicamycin A1. Residues 119 to 121 are Cytoplasmic-facing; sequence NLR. A helical transmembrane segment spans residues 122–143; sequence WRHKLLLPTAASLPLLMVYFTN. Lys-125 contacts dolichyl phosphate. Topologically, residues 144–166 are lumenal; sequence FGNTTIVVPKPFRPILGLHLDLG. A glycan (N-linked (GlcNAc...) asparagine) is linked at Asn-146. Residues 167-186 form a helical membrane-spanning segment; that stretch reads ILYYVYMGLLAVFCTNAINI. 178–186 is a binding site for dolichyl phosphate; sequence VFCTNAINI. Asn-185 is a tunicamycin A1 binding site. Asn-185 contacts Mg(2+). The Cytoplasmic segment spans residues 187-192; the sequence is LAGING. Residue Asn-191 coordinates UDP-N-acetyl-alpha-D-glucosamine. A helical membrane pass occupies residues 193–213; the sequence is LEAGQSLVISASIIVFNLVEL. Over 214 to 218 the chain is Lumenal; sequence EGDCR. Residues 219–242 form a helical membrane-spanning segment; the sequence is DDHVFSLYFMIPFFFTTLGLLYHN. The Cytoplasmic portion of the chain corresponds to 243–250; sequence WYPSRVFV. Residues 251–269 traverse the membrane as a helical segment; it reads GDTFCYFAGMTFAVVGILG. Asp-252 lines the tunicamycin A1 pocket. Residue Asp-252 coordinates Mg(2+). Topologically, residues 270–271 are lumenal; sequence HF. Residues 272–293 traverse the membrane as a helical segment; it reads SKTMLLFFMPQVFNFLYSLPQL. At 294–375 the chain is on the cytoplasmic side; that stretch reads LHIIPCPRHR…LLLKVLGPIH (82 aa). Position 301-303 (301-303) interacts with UDP-N-acetyl-alpha-D-glucosamine; that stretch reads RHR. Arg-303 contacts tunicamycin A1. A helical membrane pass occupies residues 376–400; sequence ERNLTLLLLLLQILGSAITFSIRYQ. The Lumenal portion of the chain corresponds to 401-408; it reads LVRLFYDV.

Belongs to the glycosyltransferase 4 family. As to quaternary structure, homodimer. The cofactor is Mg(2+).

The protein resides in the endoplasmic reticulum membrane. The catalysed reaction is a di-trans,poly-cis-dolichyl phosphate + UDP-N-acetyl-alpha-D-glucosamine = an N-acetyl-alpha-D-glucosaminyl-diphospho-di-trans,poly-cis-dolichol + UMP. Its pathway is protein modification; protein glycosylation. Inhibited by natural nucleoside antibiotic tunicamycin, which acts as a structural analog and competitor of UDP-GlcNAc. Activated by mannosylphosphoryldolichol and phospholipids such as phosphatidylglycerol and phosphatidylcholine. In terms of biological role, UDP-N-acetylglucosamine--dolichyl-phosphate N-acetylglucosaminephosphotransferase that operates in the biosynthetic pathway of dolichol-linked oligosaccharides, the glycan precursors employed in protein asparagine (N)-glycosylation. The assembly of dolichol-linked oligosaccharides begins on the cytosolic side of the endoplasmic reticulum membrane and finishes in its lumen. The sequential addition of sugars to dolichol pyrophosphate produces dolichol-linked oligosaccharides containing fourteen sugars, including two GlcNAcs, nine mannoses and three glucoses. Once assembled, the oligosaccharide is transferred from the lipid to nascent proteins by oligosaccharyltransferases. Catalyzes the initial step of dolichol-linked oligosaccharide biosynthesis, transfering GlcNAc-1-P from cytosolic UDP-GlcNAc onto the carrier lipid dolichyl phosphate (P-dolichol), yielding GlcNAc-P-P-dolichol embedded in the cytoplasmic leaflet of the endoplasmic reticulum membrane. This is UDP-N-acetylglucosamine--dolichyl-phosphate N-acetylglucosaminephosphotransferase from Homo sapiens (Human).